The chain runs to 187 residues: Large ribosomal subunit protein uL22B (187 aa).

This sequence belongs to the universal ribosomal protein uL22 family. Component of the large ribosomal subunit (LSU). Mature yeast ribosomes consist of a small (40S) and a large (60S) subunit. The 40S small subunit contains 1 molecule of ribosomal RNA (18S rRNA) and at least 33 different proteins. The large 60S subunit contains 3 rRNA molecules (25S, 5.8S and 5S rRNA) and at least 46 different proteins. uL22 is associated with the polypeptide exit tunnel.

It localises to the cytoplasm. Component of the ribosome, a large ribonucleoprotein complex responsible for the synthesis of proteins in the cell. The small ribosomal subunit (SSU) binds messenger RNAs (mRNAs) and translates the encoded message by selecting cognate aminoacyl-transfer RNA (tRNA) molecules. The large subunit (LSU) contains the ribosomal catalytic site termed the peptidyl transferase center (PTC), which catalyzes the formation of peptide bonds, thereby polymerizing the amino acids delivered by tRNAs into a polypeptide chain. The nascent polypeptides leave the ribosome through a tunnel in the LSU and interact with protein factors that function in enzymatic processing, targeting, and the membrane insertion of nascent chains at the exit of the ribosomal tunnel. This is Large ribosomal subunit protein uL22B (rpl1702) from Schizosaccharomyces pombe (strain 972 / ATCC 24843) (Fission yeast).